A 492-amino-acid chain; its full sequence is Solute carrier family 2, facilitated glucose transporter member 1 (492 aa).

The residue at position 1 (Met-1) is an N-acetylmethionine. Residues Met-1–Arg-11 lie on the Cytoplasmic side of the membrane. A helical transmembrane segment spans residues Leu-12–Ile-33. Over Asn-34 to Ser-66 the chain is Extracellular. N-linked (GlcNAc...) asparagine glycosylation occurs at Asn-45. A helical transmembrane segment spans residues Leu-67–Val-87. Topologically, residues Asn-88–Phe-90 are cytoplasmic. Residues Gly-91–Phe-112 traverse the membrane as a helical segment. Over Ser-113–Glu-120 the chain is Extracellular. Residues Met-121 to Val-144 form a helical membrane-spanning segment. The Cytoplasmic segment spans residues Gly-145–Ala-155. Residues Leu-156–Leu-176 traverse the membrane as a helical segment. Residue Gln-161 coordinates D-glucose. Residues Asp-177–Leu-185 are Extracellular-facing. A helical transmembrane segment spans residues Trp-186 to Phe-206. Residues Cys-207–Pro-271 are Cytoplasmic-facing. The residue at position 226 (Ser-226) is a Phosphoserine. Residues Ile-272–Tyr-293 traverse the membrane as a helical segment. D-glucose-binding positions include Gln-282 to Gln-283 and Asn-288. The Extracellular segment spans residues Ser-294–Pro-306. Residues Val-307–Val-328 form a helical membrane-spanning segment. Asn-317 contacts D-glucose. Residues Glu-329 to Arg-334 are Cytoplasmic-facing. A helical membrane pass occupies residues Thr-335 to Leu-355. The Extracellular portion of the chain corresponds to Ala-356 to Ser-365. A helical membrane pass occupies residues Tyr-366–Trp-388. Glu-380 and Trp-388 together coordinate D-glucose. Residues Phe-389–Pro-401 are Cytoplasmic-facing. The helical transmembrane segment at Ala-402–Phe-422 threads the bilayer. Topologically, residues Gln-423–Cys-429 are extracellular. Residues Gly-430–Phe-450 form a helical membrane-spanning segment. Ser-465 bears the Phosphoserine mark. A disordered region spans residues Arg-468–Val-492. A Phosphothreonine modification is found at Thr-478. Ser-490 carries the post-translational modification Phosphoserine.

The protein belongs to the major facilitator superfamily. Sugar transporter (TC 2.A.1.1) family. Glucose transporter subfamily. As to quaternary structure, found in a complex with ADD2, DMTN and SLC2A1. Interacts (via C-terminus cytoplasmic region) with DMTN. Interacts with SNX27; the interaction is required when endocytosed to prevent degradation in lysosomes and promote recycling to the plasma membrane. Interacts with GIPC (via PDZ domain). Interacts with STOM. Interacts with SGTA (via Gln-rich region). Interacts with BSG. Interacts with SMIM43; the interaction may promote SLC2A1-mediated glucose transport to meet the energy needs of mesendoderm differentiation. In terms of processing, phosphorylation at Ser-226 by PKC promotes glucose uptake by increasing cell membrane localization.

The protein resides in the cell membrane. It is found in the photoreceptor inner segment. The enzyme catalyses D-glucose(out) = D-glucose(in). The uptake of glucose is inhibited by cytochalasin B. Glucose uptake is increased in response to phorbol ester 12-O-tetradecanoylphorbol-13-acetate (TPA) treatment: TPA-induced glucose uptake requires phosphorylation at Ser-226. Functionally, facilitative glucose transporter, which is responsible for constitutive or basal glucose uptake. Has a very broad substrate specificity; can transport a wide range of aldoses including both pentoses and hexoses. Most important energy carrier of the brain: present at the blood-brain barrier and assures the energy-independent, facilitative transport of glucose into the brain. In association with BSG and NXNL1, promotes retinal cone survival by increasing glucose uptake into photoreceptors. Required for mesendoderm differentiation. In Sus scrofa (Pig), this protein is Solute carrier family 2, facilitated glucose transporter member 1.